Reading from the N-terminus, the 98-residue chain is ACCARLCCSVPTSPATTICSSDKFCRCGVCLPSTCPHTVWFLQPTCCCDNRPPPCHIPQPSVPTCFLLNSSQPTPGLESINLTTYTQPSCEPCIPSCC.

At A1 the chain carries N-acetylalanine.

It belongs to the KRTAP type 3 family. Interacts with wool keratins. In terms of tissue distribution, wool.

Functionally, in the wool cortex, wool keratin intermediate filaments are embedded in an interfilamentous matrix, consisting of hair keratin-associated proteins (KRTAP), which are essential for the formation of a rigid and resistant wool shaft through their extensive disulfide bond cross-linking with abundant cysteine residues of wool keratins. The matrix proteins include the high-sulfur and high-glycine-tyrosine keratins. The protein is Keratin, high sulfur matrix protein, IIIB4 of Ovis aries (Sheep).